We begin with the raw amino-acid sequence, 213 residues long: Thymidylate kinase (213 aa).

ATP is bound at residue 10-17 (GIDGCGKT).

This sequence belongs to the thymidylate kinase family.

The catalysed reaction is dTMP + ATP = dTDP + ADP. Functionally, phosphorylation of dTMP to form dTDP in both de novo and salvage pathways of dTTP synthesis. The chain is Thymidylate kinase from Synechococcus sp. (strain WH7803).